The primary structure comprises 354 residues: Protein-glutamate methylesterase/protein-glutamine glutaminase 2 (354 aa).

Positions 3-120 (RVVVVDDSMS…PADLADYARD (118 aa)) constitute a Response regulatory domain. A 4-aspartylphosphate modification is found at Asp-54. Positions 164–354 (ATRLSRVIAI…MGARLSEALQ (191 aa)) constitute a CheB-type methylesterase domain. Residues Ser-176, His-202, and Asp-298 contribute to the active site.

Belongs to the CheB family. Phosphorylated by CheA. Phosphorylation of the N-terminal regulatory domain activates the methylesterase activity.

The protein localises to the cytoplasm. It carries out the reaction [protein]-L-glutamate 5-O-methyl ester + H2O = L-glutamyl-[protein] + methanol + H(+). It catalyses the reaction L-glutaminyl-[protein] + H2O = L-glutamyl-[protein] + NH4(+). Functionally, involved in chemotaxis. Part of a chemotaxis signal transduction system that modulates chemotaxis in response to various stimuli. Catalyzes the demethylation of specific methylglutamate residues introduced into the chemoreceptors (methyl-accepting chemotaxis proteins or MCP) by CheR. Also mediates the irreversible deamidation of specific glutamine residues to glutamic acid. The sequence is that of Protein-glutamate methylesterase/protein-glutamine glutaminase 2 from Burkholderia thailandensis (strain ATCC 700388 / DSM 13276 / CCUG 48851 / CIP 106301 / E264).